Reading from the N-terminus, the 288-residue chain is MEIGLREWLIVIGIIVIAGILFDGWRRMRGGKGKLKFRLDRSFSNLPDEEETTSAEVLGPPRVLDTHKEPQLDEHDLPSMSANPRDNKRGAGSEKRGDKKRKDEPQQGDLNLDLDGPSLFTARDDDFPDDKPAQRITEDKDLPPVEEVLVISVISRNEGGFKGPALLQNILESGLRFGEMDIFHRHESMAGNGEVLFSMANAVKPGVFDLDDIDHFSTRAVSFFLGLPGPRRPKQAFDVMVAAARKLAHELDGELKDDQRSVMTAQTIEHYRQRIVEFERRALTQRRG.

A topological domain (periplasmic) is located at residue methionine 1. Residues 2–22 traverse the membrane as a helical segment; that stretch reads EIGLREWLIVIGIIVIAGILF. Residues 23–288 are Cytoplasmic-facing; the sequence is DGWRRMRGGK…ERRALTQRRG (266 aa). Residues 48 to 138 form a disordered region; that stretch reads DEEETTSAEV…DDKPAQRITE (91 aa). Basic and acidic residues-rich tracts occupy residues 64-77, 85-105, and 122-138; these read LDTH…EHDL, RDNK…KDEP, and ARDD…RITE.

This sequence belongs to the ZipA family. As to quaternary structure, interacts with FtsZ via their C-terminal domains.

It localises to the cell inner membrane. Functionally, essential cell division protein that stabilizes the FtsZ protofilaments by cross-linking them and that serves as a cytoplasmic membrane anchor for the Z ring. Also required for the recruitment to the septal ring of downstream cell division proteins. This Pseudomonas syringae pv. tomato (strain ATCC BAA-871 / DC3000) protein is Cell division protein ZipA.